A 247-amino-acid chain; its full sequence is NH(3)-dependent NAD(+) synthetase (247 aa).

Position 29–36 (29–36) interacts with ATP; the sequence is GISGGIDS. Asp35 contributes to the Mg(2+) binding site. Arg120 contacts deamido-NAD(+). Thr140 contacts ATP. Residue Glu145 coordinates Mg(2+). Positions 153 and 160 each coordinate deamido-NAD(+). ATP contacts are provided by Lys169 and Ser191. Deamido-NAD(+) is bound at residue 237–238; the sequence is HK.

Belongs to the NAD synthetase family. In terms of assembly, homodimer.

The enzyme catalyses deamido-NAD(+) + NH4(+) + ATP = AMP + diphosphate + NAD(+) + H(+). It participates in cofactor biosynthesis; NAD(+) biosynthesis; NAD(+) from deamido-NAD(+) (ammonia route): step 1/1. Functionally, catalyzes the ATP-dependent amidation of deamido-NAD to form NAD. Uses ammonia as a nitrogen source. This chain is NH(3)-dependent NAD(+) synthetase, found in Alkaliphilus metalliredigens (strain QYMF).